A 376-amino-acid polypeptide reads, in one-letter code: Drebrin-like protein B (376 aa).

An ADF-H domain is found at 2–133; the sequence is SVNLSKNGAA…EPESIMEKVA (132 aa). Residues 175–231 adopt a coiled-coil conformation; it reads KENFWAKAEKDEEERRIEEHRRANVEKDRLERERKEREQREAEERERRFRERSKEID. Over residues 202 to 242 the composition is skewed to basic and acidic residues; the sequence is DRLERERKEREQREAEERERRFRERSKEIDGHRKQQEEVEK. The segment at 202–288 is disordered; sequence DRLERERKER…FTASQQEEEN (87 aa). Residues 268–283 show a composition bias toward polar residues; sequence ESGSVSAQPEQFTASQ. The region spanning 317-376 is the SH3 domain; sequence DSGMCARALYDYQAADDTEISFDPDDVIIQIEMIDDGWWRGVAPSGHFGMFPANYVELLE.

This sequence belongs to the ABP1 family.

It localises to the cytoplasm. The protein localises to the cytoskeleton. The protein resides in the cell projection. It is found in the lamellipodium. Its subcellular location is the ruffle. It localises to the cell cortex. The protein localises to the cytosol. The protein resides in the synapse. It is found in the perikaryon. Its subcellular location is the neuron projection. It localises to the cell membrane. The protein localises to the cytoplasmic vesicle. The protein resides in the clathrin-coated vesicle membrane. It is found in the golgi apparatus membrane. Its subcellular location is the podosome. It localises to the early endosome. The protein localises to the dendrite. The protein resides in the postsynaptic density. Its function is as follows. Adapter protein that binds F-actin and dynamin, and thereby plays a role in receptor-mediated endocytosis. Plays a role in the reorganization of the actin cytoskeleton, formation of cell projections, such as neurites, in neuron morphogenesis and synapse formation. Does not bind G-actin and promote actin polymerization by itself, but excerts its functions by interaction with other proteins. Required for the formation of organized podosome rosettes. This is Drebrin-like protein B (dbnl-b) from Xenopus laevis (African clawed frog).